We begin with the raw amino-acid sequence, 299 residues long: Urease accessory protein UreD (299 aa).

The protein belongs to the UreD family. UreD, UreF and UreG form a complex that acts as a GTP-hydrolysis-dependent molecular chaperone, activating the urease apoprotein by helping to assemble the nickel containing metallocenter of UreC. The UreE protein probably delivers the nickel.

The protein localises to the cytoplasm. Its function is as follows. Required for maturation of urease via the functional incorporation of the urease nickel metallocenter. This chain is Urease accessory protein UreD, found in Haloarcula marismortui (strain ATCC 43049 / DSM 3752 / JCM 8966 / VKM B-1809) (Halobacterium marismortui).